The chain runs to 54 residues: Ovomucoid (54 aa).

One can recognise a Kazal-like domain in the interval 4–54 (VDCSDYPKPACTVEYMPLCGSDNKTYGNKCNFCNAVVDSNGTLTLSHFGKC). Intrachain disulfides connect cysteine 6-cysteine 36, cysteine 14-cysteine 33, and cysteine 22-cysteine 54. Asparagine 43 carries N-linked (GlcNAc...) asparagine glycosylation.

The protein resides in the secreted. The polypeptide is Ovomucoid (Anser canagicus (Emperor goose)).